Here is a 96-residue protein sequence, read N- to C-terminus: Aspartyl/glutamyl-tRNA(Asn/Gln) amidotransferase subunit C (96 aa).

This sequence belongs to the GatC family. Heterotrimer of A, B and C subunits.

The enzyme catalyses L-glutamyl-tRNA(Gln) + L-glutamine + ATP + H2O = L-glutaminyl-tRNA(Gln) + L-glutamate + ADP + phosphate + H(+). It carries out the reaction L-aspartyl-tRNA(Asn) + L-glutamine + ATP + H2O = L-asparaginyl-tRNA(Asn) + L-glutamate + ADP + phosphate + 2 H(+). Its function is as follows. Allows the formation of correctly charged Asn-tRNA(Asn) or Gln-tRNA(Gln) through the transamidation of misacylated Asp-tRNA(Asn) or Glu-tRNA(Gln) in organisms which lack either or both of asparaginyl-tRNA or glutaminyl-tRNA synthetases. The reaction takes place in the presence of glutamine and ATP through an activated phospho-Asp-tRNA(Asn) or phospho-Glu-tRNA(Gln). In Bacillus velezensis (strain DSM 23117 / BGSC 10A6 / LMG 26770 / FZB42) (Bacillus amyloliquefaciens subsp. plantarum), this protein is Aspartyl/glutamyl-tRNA(Asn/Gln) amidotransferase subunit C.